We begin with the raw amino-acid sequence, 1023 residues long: Probable beta-glucosidase E (1023 aa).

The disordered stretch occupies residues Met-1–Leu-51. The Cytoplasmic segment spans residues Met-1–Arg-128. Positions Ser-11 to Glu-45 are enriched in basic and acidic residues. The chain crosses the membrane as a helical; Signal-anchor for type II membrane protein span at residues Thr-129–Ser-149. Residues Thr-150 to Pro-1023 are Extracellular-facing. N-linked (GlcNAc...) asparagine glycosylation is found at Asn-199 and Asn-387. Asp-415 is an active-site residue. Residues Asn-458 and Asn-497 are each glycosylated (N-linked (GlcNAc...) asparagine). 2 disordered regions span residues Trp-485–Gly-515 and Asn-822–Asp-841. The segment covering Pro-827 to Pro-838 has biased composition (low complexity). A glycan (N-linked (GlcNAc...) asparagine) is linked at Asn-848. A disordered region spans residues Ala-873 to Ser-909. 2 N-linked (GlcNAc...) asparagine glycosylation sites follow: Asn-964 and Asn-979.

Belongs to the glycosyl hydrolase 3 family.

It is found in the cell membrane. The enzyme catalyses Hydrolysis of terminal, non-reducing beta-D-glucosyl residues with release of beta-D-glucose.. Its pathway is glycan metabolism; cellulose degradation. In terms of biological role, beta-glucosidases are one of a number of cellulolytic enzymes involved in the degradation of cellulosic biomass. Catalyzes the last step releasing glucose from the inhibitory cellobiose. The chain is Probable beta-glucosidase E (bglE) from Emericella nidulans (strain FGSC A4 / ATCC 38163 / CBS 112.46 / NRRL 194 / M139) (Aspergillus nidulans).